Here is a 142-residue protein sequence, read N- to C-terminus: Transmembrane protein 170A (142 aa).

Residues 1 to 48 (MEGGGGGLGGEPGLLQQILSLRLVPRVGNVTDCQRATLCSFPEMWYGV) are Lumenal-facing. N-linked (GlcNAc...) asparagine glycosylation is present at Asn29. Residues 49 to 69 (FLWALVSSLFFHIPAGLLALF) traverse the membrane as a helical segment. Residues 70 to 78 (TLRHHKYGR) lie on the Cytoplasmic side of the membrane. The helical transmembrane segment at 79–99 (FMSVGIFLMGVLGPISAGILT) threads the bilayer. The Lumenal portion of the chain corresponds to 100 to 114 (SAAIAGVYKAAGKEM). The helical transmembrane segment at 115–135 (IPFEALVLGVGQTFCVLIVSF) threads the bilayer. Residues 136–142 (LRILATL) are Cytoplasmic-facing.

The protein belongs to the TMEM170 family.

The protein localises to the endoplasmic reticulum membrane. Its subcellular location is the nucleus envelope. May regulate membrane morphogenesis in the endoplasmic reticulum (ER) by promoting ER sheet formation at the expense of ER tubules. The sequence is that of Transmembrane protein 170A (tmem170a) from Xenopus laevis (African clawed frog).